The following is a 113-amino-acid chain: MTDTHSIAQPFEAEVSPANNRQLTVSYASRYPDYSRIPAITLKGQWLEAAGFATGTVVDVKVMEGCIVLTAQPPAAAESELMQSLRQVCKLSARKQRQVQEFIGVIAGKQKVA.

In terms of domain architecture, SpoVT-AbrB spans 29–74 (SRYPDYSRIPAITLKGQWLEAAGFATGTVVDVKVMEGCIVLTAQPP).

This sequence belongs to the SymE family.

The protein localises to the cytoplasm. Its function is as follows. Involved in the degradation and recycling of damaged RNA. It is itself a target for degradation by the ATP-dependent protease Lon. This chain is Endoribonuclease SymE, found in Escherichia coli (strain 55989 / EAEC).